Consider the following 788-residue polypeptide: Protein FAR1-RELATED SEQUENCE 5 (788 aa).

An FAR1 domain is found at alanine 87–proline 179. Positions threonine 299–glutamine 395 constitute an MULE domain. The SWIM-type zinc-finger motif lies at phenylalanine 584–asparagine 616. A disordered region spans residues serine 713–glutamate 733. A coiled-coil region spans residues glutamate 731–aspartate 768.

Belongs to the FHY3/FAR1 family. As to expression, expressed in hypocotyls, rosette and cauline leaves, inflorescences stems, flowers and siliques.

Its subcellular location is the nucleus. Its function is as follows. Putative transcription activator involved in regulating light control of development. The protein is Protein FAR1-RELATED SEQUENCE 5 (FRS5) of Arabidopsis thaliana (Mouse-ear cress).